Here is a 157-residue protein sequence, read N- to C-terminus: Snaclec 3 (157 aa).

An N-terminal signal peptide occupies residues 1–23 (MGRLIFLSFGWLVVFLSLSGTGA). 3 disulfides stabilise this stretch: Cys27/Cys38, Cys55/Cys153, and Cys128/Cys145. Residues 34–154 (YGQHCYRAFS…CAGHYPFICK (121 aa)) enclose the C-type lectin domain.

This sequence belongs to the snaclec family. As to quaternary structure, heterodimer; disulfide-linked. Expressed by the venom gland.

It localises to the secreted. In terms of biological role, interferes with one step of hemostasis (modulation of platelet aggregation, or coagulation cascade, for example). The polypeptide is Snaclec 3 (Bitis gabonica (Gaboon adder)).